The primary structure comprises 197 residues: Inner membrane-spanning protein YciB (197 aa).

5 helical membrane-spanning segments follow: residues 36 to 56, 64 to 84, 90 to 110, 135 to 155, and 162 to 182; these read IYSATAMLIISSLVVYGALFL, GQWLTLIACLVFGGLTLTFHS, WKAPVVNWLFALGFAGSHFIG, LAWIAFFLFCGAANLFVAFTF, and FKVFGSLGMTVIFLVAQGVYL.

This sequence belongs to the YciB family.

It is found in the cell inner membrane. Plays a role in cell envelope biogenesis, maintenance of cell envelope integrity and membrane homeostasis. The sequence is that of Inner membrane-spanning protein YciB from Pseudomonas putida (strain ATCC 700007 / DSM 6899 / JCM 31910 / BCRC 17059 / LMG 24140 / F1).